The chain runs to 177 residues: Large ribosomal subunit protein uL6 (177 aa).

The protein belongs to the universal ribosomal protein uL6 family. In terms of assembly, part of the 50S ribosomal subunit.

This protein binds to the 23S rRNA, and is important in its secondary structure. It is located near the subunit interface in the base of the L7/L12 stalk, and near the tRNA binding site of the peptidyltransferase center. The sequence is that of Large ribosomal subunit protein uL6 from Pectobacterium carotovorum subsp. carotovorum (strain PC1).